The sequence spans 420 residues: Serine/threonine-protein kinase PCRK2 (420 aa).

Residues 1–64 are disordered; that stretch reads MKCFLFPLGD…SNTSMSAREN (64 aa). The segment covering 22–36 has biased composition (polar residues); sequence SPTSNFSDVNKSGSD. Over residues 42-58 the composition is skewed to low complexity; sequence VSGTSTVSSTGRNSNTS. Phosphothreonine is present on Thr70. The 286-residue stretch at 81–366 folds into the Protein kinase domain; the sequence is FSRSGMIGEG…EVLEMVTKIV (286 aa). ATP contacts are provided by residues 87–95 and Lys115; that span reads IGEGGFGCV. Tyr164 is subject to Phosphotyrosine. Asp215 functions as the Proton acceptor in the catalytic mechanism. 2 positions are modified to phosphoserine: Ser219 and Ser249. Thr250 and Thr255 each carry phosphothreonine. A Phosphotyrosine modification is found at Tyr263. The tract at residues 369-396 is disordered; that stretch reads SSPGNGGKKPQLVPLKSQETSRVEEGKN. Residues 387–396 show a composition bias toward basic and acidic residues; it reads ETSRVEEGKN.

This sequence belongs to the protein kinase superfamily. Ser/Thr protein kinase family. As to quaternary structure, interacts with FLS2.

Its subcellular location is the cell membrane. It carries out the reaction L-seryl-[protein] + ATP = O-phospho-L-seryl-[protein] + ADP + H(+). The catalysed reaction is L-threonyl-[protein] + ATP = O-phospho-L-threonyl-[protein] + ADP + H(+). In terms of biological role, functions redundantly with PCRK1 in basal resistance against bacterial pathogens and in regulation of plant immunity. Functions together with PCRK1 downstream of the pathogen-associated molecular pattern (PAMP) receptor FLS2. Contributes to the induction of SARD1 and CBP60G, which are transcriptional activator of ICS1, an enzyme involved in salicylate (SA) biosynthesis upon pathogen attack. The protein is Serine/threonine-protein kinase PCRK2 of Arabidopsis thaliana (Mouse-ear cress).